Reading from the N-terminus, the 437-residue chain is Glutamate-1-semialdehyde 2,1-aminomutase (437 aa).

K274 bears the N6-(pyridoxal phosphate)lysine mark.

It belongs to the class-III pyridoxal-phosphate-dependent aminotransferase family. HemL subfamily. In terms of assembly, homodimer. Pyridoxal 5'-phosphate serves as cofactor.

The protein localises to the cytoplasm. The enzyme catalyses (S)-4-amino-5-oxopentanoate = 5-aminolevulinate. Its pathway is porphyrin-containing compound metabolism; protoporphyrin-IX biosynthesis; 5-aminolevulinate from L-glutamyl-tRNA(Glu): step 2/2. This chain is Glutamate-1-semialdehyde 2,1-aminomutase, found in Verminephrobacter eiseniae (strain EF01-2).